The sequence spans 255 residues: Tryptophan synthase alpha chain (255 aa).

Residues E51 and D62 each act as proton acceptor in the active site.

It belongs to the TrpA family. Tetramer of two alpha and two beta chains.

The enzyme catalyses (1S,2R)-1-C-(indol-3-yl)glycerol 3-phosphate + L-serine = D-glyceraldehyde 3-phosphate + L-tryptophan + H2O. It participates in amino-acid biosynthesis; L-tryptophan biosynthesis; L-tryptophan from chorismate: step 5/5. The alpha subunit is responsible for the aldol cleavage of indoleglycerol phosphate to indole and glyceraldehyde 3-phosphate. The protein is Tryptophan synthase alpha chain of Maridesulfovibrio salexigens (strain ATCC 14822 / DSM 2638 / NCIMB 8403 / VKM B-1763) (Desulfovibrio salexigens).